The chain runs to 412 residues: 43 kDa receptor-associated protein of the synapse (412 aa).

Glycine 2 carries N-myristoyl glycine lipidation. TPR repeat units lie at residues 6-39 (TKQQ…SADP), 83-116 (TEGY…QGTT), 123-156 (GQVS…AHNN), 163-196 (CRVC…VNDY), 206-239 (AMSQ…ALQH), 246-279 (ALCL…MTEI), and 286-319 (IQVL…AEGL). Phosphotyrosine is present on tyrosine 196. The RING-type zinc-finger motif lies at 363–403 (CGMCGESIGEKNNQLQALPCSHFFHLKCLQTNGTRGCPNCR).

Belongs to the RAPsyn family. Expressed in muscle fibers and in neurons.

The protein localises to the cell membrane. Its subcellular location is the postsynaptic cell membrane. It localises to the cytoplasm. The protein resides in the cytoskeleton. Functionally, postsynaptic protein required for clustering of nicotinic acetylcholine receptors (nAChRs) at the neuromuscular junction. It may link the receptor to the underlying postsynaptic cytoskeleton, possibly by direct association with actin or spectrin. This Gallus gallus (Chicken) protein is 43 kDa receptor-associated protein of the synapse (RAPSN).